Reading from the N-terminus, the 198-residue chain is Translation machinery-associated protein 22 (198 aa).

Residues 99 to 170 enclose the SUI1 domain; that stretch reads VIIKREARTK…EVETYIHSLL (72 aa).

It belongs to the DENR family. In terms of assembly, interacts with the 40S ribosomal subunit.

The protein localises to the cytoplasm. The sequence is that of Translation machinery-associated protein 22 (TMA22) from Saccharomyces cerevisiae (strain YJM789) (Baker's yeast).